A 492-amino-acid chain; its full sequence is Proline--tRNA ligase (492 aa).

It belongs to the class-II aminoacyl-tRNA synthetase family. ProS type 3 subfamily. Homodimer.

The protein localises to the cytoplasm. The catalysed reaction is tRNA(Pro) + L-proline + ATP = L-prolyl-tRNA(Pro) + AMP + diphosphate. Its function is as follows. Catalyzes the attachment of proline to tRNA(Pro) in a two-step reaction: proline is first activated by ATP to form Pro-AMP and then transferred to the acceptor end of tRNA(Pro). The chain is Proline--tRNA ligase from Christiangramia forsetii (strain DSM 17595 / CGMCC 1.15422 / KT0803) (Gramella forsetii).